The chain runs to 224 residues: Protein HLJ1 (224 aa).

The J domain maps to 18 to 87 (DKHEFYEILK…RSIYDRIGRD (70 aa)). Residues 84-93 (IGRDPDDRQM) show a composition bias toward basic and acidic residues. Positions 84-107 (IGRDPDDRQMPSRGAASGFRGSAG) are disordered. Ser-109 carries the phosphoserine modification. Positions 173–192 (NRGGSPFMRQQPRSRQQQQQ) are disordered. A compositionally biased stretch (low complexity) spans 181–192 (RQQPRSRQQQQQ).

This Saccharomyces cerevisiae (strain ATCC 204508 / S288c) (Baker's yeast) protein is Protein HLJ1 (HLJ1).